Consider the following 794-residue polypeptide: ATP-dependent RNA helicase SUPV3L1, mitochondrial (794 aa).

The transit peptide at 1-30 (MRRCAWPLLRLSSRVGLALRHGGAVRLRQA) directs the protein to the mitochondrion. The Helicase ATP-binding domain occupies 182–322 (EARAIQRKII…AIDLVTELMY (141 aa)). 195–202 (GPTNSGKT) contributes to the ATP binding site. A Helicase C-terminal domain is found at 341-506 (VLDYALESLD…GLHPTPEQIE (166 aa)). Disordered regions lie at residues 678-741 (EVMS…HGRG) and 764-794 (EWQD…KKKK). The span at 689 to 704 (TKRDARTVSDHRDAKS) shows a compositional bias: basic and acidic residues.

Belongs to the helicase family. The cofactor is Mg(2+). Mn(2+) is required as a cofactor.

The protein resides in the nucleus. It localises to the mitochondrion matrix. Its subcellular location is the mitochondrion nucleoid. The enzyme catalyses ATP + H2O = ADP + phosphate + H(+). Functionally, major helicase player in mitochondrial RNA metabolism. Component of the mitochondrial degradosome (mtEXO) complex, that degrades 3' overhang double-stranded RNA with a 3'-to-5' directionality in an ATP-dependent manner. ATPase and ATP-dependent multisubstrate helicase, able to unwind double-stranded (ds) DNA and RNA, and RNA/DNA heteroduplexes in the 5'-to-3' direction. Plays a role in the RNA surveillance system in mitochondria; regulates the stability of mature mRNAs, the removal of aberrantly formed mRNAs and the rapid degradation of non coding processing intermediates. Also implicated in recombination and chromatin maintenance pathways. May protect cells from apoptosis. Associates with mitochondrial DNA. The sequence is that of ATP-dependent RNA helicase SUPV3L1, mitochondrial (SUPV3L1) from Gallus gallus (Chicken).